We begin with the raw amino-acid sequence, 688 residues long: MDFITINSSNKTEEFALKQVAKQATSSLMYRLGKTIILASVCVEREPVSEDFLPLVVQFLEKSYAAGKIPGGFVKREGRAQDFEILTSRLIDRTLRPLFPKDYRYPTQITLMVLSHDIENDLQVSALNAASAALFLAHIAPIKSVSACRIARIDNEFIINPNTSLLNQSSLDLFVSGTKESLNMIEMRSLGQKLNALEEPLMLEALELAQKSLKETCTLYEEVFTPHQNELLFKESQAIVLNERLLDLLTNQYFDEIIKGIESSALSERENVFNEIAKKISEAHSEFSLEEIEWSLEKVKKTEIRRMIIQDKIRPDKRALEEVRPILIESDLLPMAHSSILFTRGQTQSLVVGVLGTDNDAQTHESLEHKTPIKERFMFHYNFPPFCVGEASSIGAASRRELGHGNLAKRALETSIKNKEQVIRLVSEILESNGSSSMASVCAGSLALYASGVEIYDLVAGVAMGMVSEGQDHAILSDISGLEDAEGDMDFKIAGNLEGITAMQMDTKMSGIKLEILYQALLQAKEAREHILKIMHEAKEKIVINFSHLPTTEIFNVAPDKIVEIIGQGGRVIKEIVEKFEVKIDLNKPSGEVKIMGNKERVLKTKEFILNYLHSLDQELEQYAIDEVLEAQVKRIVDFGAFLSLPKGGEGLLRKQNMDRCQVVLKEGDSIKCRVISFNKGKIALDLA.

Residues Asp484 and Asp490 each coordinate Mg(2+). Residues 550–609 (PTTEIFNVAPDKIVEIIGQGGRVIKEIVEKFEVKIDLNKPSGEVKIMGNKERVLKTKEFI) form the KH domain. The S1 motif domain maps to 626-688 (DEVLEAQVKR…NKGKIALDLA (63 aa)).

The protein belongs to the polyribonucleotide nucleotidyltransferase family. Mg(2+) serves as cofactor.

The protein resides in the cytoplasm. The catalysed reaction is RNA(n+1) + phosphate = RNA(n) + a ribonucleoside 5'-diphosphate. Its function is as follows. Involved in mRNA degradation. Catalyzes the phosphorolysis of single-stranded polyribonucleotides processively in the 3'- to 5'-direction. This Helicobacter pylori (strain P12) protein is Polyribonucleotide nucleotidyltransferase.